Here is a 359-residue protein sequence, read N- to C-terminus: Guanine nucleotide-binding protein subunit alpha-11 (359 aa).

Residues cysteine 9 and cysteine 10 are each lipidated (S-palmitoyl cysteine). One can recognise a G-alpha domain in the interval 38 to 359; sequence RELKLLLLGT…QLNLKEYNLV (322 aa). Positions 41–54 are G1 motif; it reads KLLLLGTGESGKST. GTP contacts are provided by residues 46 to 53 and 180 to 183; these read GTGESGKS and LRVR. Serine 53 is a binding site for Mg(2+). Residues 178 to 186 are G2 motif; that stretch reads DVLRVRVPT. Threonine 186 provides a ligand contact to Mg(2+). The G3 motif stretch occupies residues 201-210; it reads FRMVDVGGQR. The tract at residues 270–277 is G4 motif; it reads ILFLNKKD. GTP contacts are provided by residues 274 to 277 and alanine 331; that span reads NKKD. Residues 329 to 334 form a G5 motif region; that stretch reads TCATDT.

Belongs to the G-alpha family. G(q) subfamily. G proteins are composed of 3 units; alpha, beta and gamma. The alpha chain contains the guanine nucleotide binding site. Interacts with RGS22. Interacts with NTSR1.

The protein localises to the cell membrane. Its subcellular location is the cytoplasm. The catalysed reaction is GTP + H2O = GDP + phosphate + H(+). In terms of biological role, guanine nucleotide-binding proteins (G proteins) function as transducers downstream of G protein-coupled receptors (GPCRs) in numerous signaling cascades. The alpha chain contains the guanine nucleotide binding site and alternates between an active, GTP-bound state and an inactive, GDP-bound state. Signaling by an activated GPCR promotes GDP release and GTP binding. The alpha subunit has a low GTPase activity that converts bound GTP to GDP, thereby terminating the signal. Both GDP release and GTP hydrolysis are modulated by numerous regulatory proteins. Signaling is mediated via phospholipase C-beta-dependent inositol lipid hydrolysis for signal propagation: activates phospholipase C-beta: following GPCR activation, GNA11 activates PLC-beta (PLCB1, PLCB2, PLCB3 or PLCB4), leading to production of diacylglycerol (DAG) and inositol 1,4,5-trisphosphate (IP3). Transduces FFAR4 signaling in response to long-chain fatty acids (LCFAs). Together with GNAQ, required for heart development. In the respiratory epithelium, transmits OXGR1-dependent signals that lead to downstream intracellular Ca(2+) release and mucocilliary clearance of airborne pathogens. This chain is Guanine nucleotide-binding protein subunit alpha-11 (GNA11), found in Bos taurus (Bovine).